A 516-amino-acid polypeptide reads, in one-letter code: Delta(24)-sterol reductase (516 aa).

The N-terminal stretch at 1-22 (MEPAVSLAVCALLFLLWVRLKG) is a signal peptide. Over 23 to 31 (LEFVLIHQR) the chain is Lumenal. A helical transmembrane segment spans residues 32–52 (WVFVCLFLLPLSLIFDIYYYV). Topologically, residues 53-516 (RAWVVFKLSS…YDKICKAARH (464 aa)) are cytoplasmic. The region spanning 58 to 234 (FKLSSAPRLH…VAAEIRIIPA (177 aa)) is the FAD-binding PCMH-type domain. Residue 163–175 (TVGGLIMGTGIES) coordinates FAD.

It belongs to the FAD-binding oxidoreductase/transferase type 4 family. In terms of assembly, interacts with DHCR7; this interaction regulates DHCR7 activity. The cofactor is FAD. As to expression, highly expressed in brain and adrenal gland with moderate expression in liver, lung, spleen, prostate and spinal cord. Low expression in heart, uterus and prostate. Undetectable in blood cells. In the brain, strongly expressed in cortical regions, substantia nigra, caudate nucleus, hippocampus, medulla oblongata and pons. In brains affected by Alzheimer disease, expression in the inferior temporal lobe is substantially lower than in the frontal cortex.

Its subcellular location is the endoplasmic reticulum membrane. It is found in the golgi apparatus membrane. It catalyses the reaction cholesterol + NADP(+) = desmosterol + NADPH + H(+). The enzyme catalyses lanosterol + NADPH + H(+) = 24,25-dihydrolanosterol + NADP(+). It carries out the reaction 5alpha-cholest-8-en-3beta-ol + NADP(+) = zymosterol + NADPH + H(+). The protein operates within steroid biosynthesis; cholesterol biosynthesis. Functionally, catalyzes the reduction of the delta-24 double bond of sterol intermediates during cholesterol biosynthesis. In addition to its cholesterol-synthesizing activity, can protect cells from oxidative stress by reducing caspase 3 activity during apoptosis induced by oxidative stress. Also protects against amyloid-beta peptide-induced apoptosis. The protein is Delta(24)-sterol reductase (DHCR24) of Homo sapiens (Human).